The chain runs to 347 residues: Ketol-acid reductoisomerase (NADP(+)) (347 aa).

Residues T3–T182 form the KARI N-terminal Rossmann domain. Residues Y26–Q29, R49, S53, and D83–Q86 contribute to the NADP(+) site. H108 is an active-site residue. Residue G134 coordinates NADP(+). The KARI C-terminal knotted domain maps to T183–I328. Positions 191, 195, 227, and 231 each coordinate Mg(2+). S252 is a binding site for substrate.

The protein belongs to the ketol-acid reductoisomerase family. It depends on Mg(2+) as a cofactor.

It catalyses the reaction (2R)-2,3-dihydroxy-3-methylbutanoate + NADP(+) = (2S)-2-acetolactate + NADPH + H(+). The enzyme catalyses (2R,3R)-2,3-dihydroxy-3-methylpentanoate + NADP(+) = (S)-2-ethyl-2-hydroxy-3-oxobutanoate + NADPH + H(+). Its pathway is amino-acid biosynthesis; L-isoleucine biosynthesis; L-isoleucine from 2-oxobutanoate: step 2/4. The protein operates within amino-acid biosynthesis; L-valine biosynthesis; L-valine from pyruvate: step 2/4. Its function is as follows. Involved in the biosynthesis of branched-chain amino acids (BCAA). Catalyzes an alkyl-migration followed by a ketol-acid reduction of (S)-2-acetolactate (S2AL) to yield (R)-2,3-dihydroxy-isovalerate. In the isomerase reaction, S2AL is rearranged via a Mg-dependent methyl migration to produce 3-hydroxy-3-methyl-2-ketobutyrate (HMKB). In the reductase reaction, this 2-ketoacid undergoes a metal-dependent reduction by NADPH to yield (R)-2,3-dihydroxy-isovalerate. The polypeptide is Ketol-acid reductoisomerase (NADP(+)) (Leuconostoc mesenteroides subsp. mesenteroides (strain ATCC 8293 / DSM 20343 / BCRC 11652 / CCM 1803 / JCM 6124 / NCDO 523 / NBRC 100496 / NCIMB 8023 / NCTC 12954 / NRRL B-1118 / 37Y)).